Here is a 142-residue protein sequence, read N- to C-terminus: Hemoglobin subunit alpha (142 aa).

A Globin domain is found at 2 to 142; that stretch reads VLSPADKTNV…VSTVLTSKYR (141 aa). Phosphoserine is present on S4. K8 carries the N6-succinyllysine modification. Residue T9 is modified to Phosphothreonine. At K12 the chain carries N6-succinyllysine. Residue K17 is modified to N6-acetyllysine; alternate. The residue at position 17 (K17) is an N6-succinyllysine; alternate. Y25 carries the phosphotyrosine modification. S36 bears the Phosphoserine mark. The residue at position 41 (K41) is an N6-succinyllysine. The residue at position 50 (S50) is a Phosphoserine. H59 lines the O2 pocket. Heme b is bound at residue H88. S103 bears the Phosphoserine mark. Position 109 is a phosphothreonine (T109). S125 carries the phosphoserine modification. T135 and T138 each carry phosphothreonine. At S139 the chain carries Phosphoserine.

It belongs to the globin family. Heterotetramer of two alpha chains and two beta chains. As to expression, red blood cells.

Involved in oxygen transport from the lung to the various peripheral tissues. In terms of biological role, hemopressin acts as an antagonist peptide of the cannabinoid receptor CNR1. Hemopressin-binding efficiently blocks cannabinoid receptor CNR1 and subsequent signaling. This chain is Hemoglobin subunit alpha (HBA), found in Ailuropoda melanoleuca (Giant panda).